The sequence spans 46 residues: Protein PsbN (46 aa).

Residues 10–30 (IAITILIVLLGLTAFGVYTAF) traverse the membrane as a helical segment.

It belongs to the PsbN family.

It localises to the cellular thylakoid membrane. Functionally, may play a role in photosystem I and II biogenesis. This Prochlorococcus marinus (strain SARG / CCMP1375 / SS120) protein is Protein PsbN.